Here is a 280-residue protein sequence, read N- to C-terminus: Large ribosomal subunit protein uL2 (280 aa).

2 disordered regions span residues 29-58 (PEKS…GGGH) and 225-280 (VMNP…NKKR). Residues 45–58 (SHGHITTRHRGGGH) show a composition bias toward basic residues. Residues 253-269 (KEGRTRKPKRYSDDMIV) are compositionally biased toward basic and acidic residues. The segment covering 270-280 (RRRRANKNKKR) has biased composition (basic residues).

Belongs to the universal ribosomal protein uL2 family. Part of the 50S ribosomal subunit. Forms a bridge to the 30S subunit in the 70S ribosome.

Functionally, one of the primary rRNA binding proteins. Required for association of the 30S and 50S subunits to form the 70S ribosome, for tRNA binding and peptide bond formation. It has been suggested to have peptidyltransferase activity; this is somewhat controversial. Makes several contacts with the 16S rRNA in the 70S ribosome. The polypeptide is Large ribosomal subunit protein uL2 (Corynebacterium glutamicum (strain R)).